The primary structure comprises 265 residues: Undecaprenyl-diphosphatase 1 (265 aa).

Transmembrane regions (helical) follow at residues 4–24, 42–62, 84–104, 108–128, 184–204, 217–237, and 245–265; these read IIIAFILGIVEGLAEFLPISS, AKTFEIVIQLGAILAIAILYH, FHVFLGVFPAVVAGLLLHDVI, LFQPYTVVIGLVAGAILMILA, SEFSFLIALPVMVGATSLDLL, MFAVGFITSFIVAMLAVVTFL, and LKPFAYYRILLAILFTLFVLL.

The protein belongs to the UppP family.

It localises to the cell membrane. It carries out the reaction di-trans,octa-cis-undecaprenyl diphosphate + H2O = di-trans,octa-cis-undecaprenyl phosphate + phosphate + H(+). In terms of biological role, catalyzes the dephosphorylation of undecaprenyl diphosphate (UPP). Confers resistance to bacitracin. The polypeptide is Undecaprenyl-diphosphatase 1 (Bacillus cereus (strain ZK / E33L)).